Here is a 1625-residue protein sequence, read N- to C-terminus: MVGRVKVPCCSVCHTRYNEDERVPLLLQCGHGFCKDCLSKMFSTSSDTTLTCPRCRHVSVVGNSVQGLRKNYAMLALIHAASGGANFDCDYTDDEDDDDEEDGSDEDGARAARGFHASSSINSLCGPVIEVGAHPEMKLVRQIGEESSSGGFGGVEMWDATVAGGGGRCKHRVAVKKMTLTEDMDVEWMQGQLESLRRASMWCRNVCTFHGVVKMDGSLCLLMDRCFGSVQSEMQRNEGRLTLEQILRYGADVARGVAELHAAGVICMNIKPSNLLLDASGNAVVSDYGLAPILKKPTCQKTRPEFDSSKVTLYTDCVTLSPHYTAPEAWGPVKKLFWEDASGVSPESDAWSFGCTLVEMCTGSTPWDGLSREEIFQAVVKARKVPPQYERIVGVGIPRELWKMIGECLQFKPSKRPTFNAMLATFLRHLQEIPRSPSASPDNGIAKICEVNIVQAPRATNIGVFQDNPNNLHRVVLEGDFEGVRNILAKAAAGGGGSSVRSLLEAQNADGQSALHLACRRGSAELVEAILEYGEANVDIVDKDGDPPLVFALAAGSPQCVHVLIKKGANVRSRLREGSGPSVAHVCSYHGQPDCMRELLVAGADPNAVDDEGETVLHRAVAKKYTDCAIVILENGGSRSMTVSNAKCLTPLHMCVATWNVAVIKRWVEVSSPEEISQAINIPSPVGTALCMAASIRKDHEKEGRELVQILLAAGADPTAQDAQHGRTALHTAAMANNVELVRVILDAGVNANIRNVHNTIPLHMALARGANSCVSLLLESGSDCNIQDDEGDNAFHIAADAAKMIRENLDWLIVMLRSPDAAVDVRNHSGKTVRDFLEALPREWISEDLMEALLKRGVHLSPTIYEVGDWVKFKRGITTPLHGWQGAKPKSVGFVQTILEKEDMIIAFCSGEARVLANEVVKLIPLDRGQHVRLRADVKEPRFGWRGQSRDSVGTVLCVDEDGILRVGFPGASRGWKADPAEMERVEEFKVGDWVRIRQNLTSAKHGFGSVVPGSMGIVYCVRPDSSLLVELSYLPNPWHCEPEEVEPVAPFRIGDRVCVKRSVAEPRYAWGGETHHSVGKISEIENDGLLIIEIPNRPIPWQADPSDMEKIDDFKVGDWVRVKASVSSPKYGWEDITRNSIGVMHSLDEDGDVGIAFCFRSKPFSCSVTDVEKVTPFHVGQEIHMTPSITQPRLGWSNETPATIGKVMRIDMDGTLSAQVTGRQTLWRVSPGDAELLSGFEVGDWVRSKPSLGNRPSYDWSNVGRESIAVVHSIQETGYLELACCFRKGRWSTHYTDLEKIPALKVGQFVHFQKGITEPRWGWRAAKPDSRGIITTVHADGEVRVAFFGLPGLWRGDPADLEVEPMFEVGEWVRLREGVSCWKSVGPGSVGVVHGVGYEGDEWDGTTSVSFCGEQERWAGPTSHLEKAKKLVVGQKTRVKLAVKQPRFGWSGHSHGSVGTISAIDADGKLRIYTPAGSKTWMLDPSEVETIEEEELKIGDWVRVKASITTPTYQWGEVNPSSTGVVHRMEDGDLCVSFCFLDRLWLCKAGELERIRPFRIGDRVKIKDGLVTPRWGWGMETHASKGHVVGVDANGKLRIKFLWREGRPWIGDPADIVLDETSG.

The RING-type zinc finger occupies 10–56; sequence CSVCHTRYNEDERVPLLLQCGHGFCKDCLSKMFSTSSDTTLTCPRCR. A compositionally biased stretch (acidic residues) spans 91–106; it reads YTDDEDDDDEEDGSDE. The interval 91-110 is disordered; the sequence is YTDDEDDDDEEDGSDEDGAR. Positions 141 to 427 constitute a Protein kinase domain; it reads RQIGEESSSG…TFNAMLATFL (287 aa). Residues 147 to 155 and Lys176 each bind ATP; that span reads SSSGGFGGV. 11 ANK repeats span residues 467–496, 510–540, 544–573, 579–608, 612–641, 647–676, 685–720, 725–754, 758–787, 791–826, and 832–863; these read DNPN…AGGG, DGQS…NVDI, DGDP…NVRS, SGPS…DPNA, EGET…SRSM, KCLT…PEEI, PVGT…DPTA, HGRT…NANI, HNTI…DCNI, EGDN…AVDV, and KTVR…HLSP.

As to quaternary structure, interacts with ABI5 and EDR1. Autophosphotylated and autoubiquitinated in vitro. In terms of processing, phosphorylation enhances self-ubiquitination. Post-translationally, autoubiquitinated in response to abscisic acid (ABA) and subsequently targeted to proteolysis. In terms of tissue distribution, expressed in all tissues of young seedlings. In flowering plants, only detected in the youngest part of the stem, anthers and the receptacle of immature siliques. Not found in mature leave, older parts of the stem, flower parts other than anthers or mature siliques.

The protein localises to the golgi apparatus. It localises to the trans-Golgi network. The protein resides in the early endosome. The enzyme catalyses L-seryl-[protein] + ATP = O-phospho-L-seryl-[protein] + ADP + H(+). It carries out the reaction L-threonyl-[protein] + ATP = O-phospho-L-threonyl-[protein] + ADP + H(+). It catalyses the reaction S-ubiquitinyl-[E2 ubiquitin-conjugating enzyme]-L-cysteine + [acceptor protein]-L-lysine = [E2 ubiquitin-conjugating enzyme]-L-cysteine + N(6)-ubiquitinyl-[acceptor protein]-L-lysine.. Its pathway is protein modification; protein ubiquitination. Its function is as follows. Mediates E2-dependent protein ubiquitination. Acts as a negative regulator of abscisic acid signaling. Required for ABI5 degradation, by mediating its ubiquitination. Together with EDR1, may regulate endocytic trafficking and/or the formation of signaling complexes on trans-Golgi network (TGN)/ early endosome (EE) vesicles during stress responses. This Arabidopsis thaliana (Mouse-ear cress) protein is E3 ubiquitin-protein ligase KEG (KEG).